The primary structure comprises 333 residues: Homeobox protein HMX1 (333 aa).

Disordered stretches follow at residues 1–74 (MAQD…STSA), 86–109 (GTEGGGGTRRAAAGGGGGRGAPRC), and 139–204 (CASP…KKKT). A compositionally biased stretch (polar residues) spans 17 to 30 (DYTQGNTDRSTAAA). The segment covering 87 to 105 (TEGGGGTRRAAAGGGGGRG) has biased composition (gly residues). Basic and acidic residues predominate over residues 144 to 158 (TSDRDSPELPEDTER). Residues 159 to 176 (AGGGGRAAARGPAGGRQS) show a composition bias toward gly residues. Over residues 181–192 (EEEEERGEEAGE) the composition is skewed to acidic residues. Residues 201–260 (KKKTRTVFSRSQVFQLESTFDVKRYLSSSERAGLAASLHLTETQVKIWFQNRRNKWKRQL) constitute a DNA-binding region (homeobox). The HMX family specific domain 1 motif lies at 261 to 271 (AADLEAANLSH).

Belongs to the HMX homeobox family.

It is found in the nucleus. Its function is as follows. DNA-binding protein that binds to the 5'-CAAG-3' core sequence. May function as a transcriptional repressor. Seems to act as a transcriptional antagonist of NKX2-5. May play an important role in the development of craniofacial structures such as the eye and ear. In Gallus gallus (Chicken), this protein is Homeobox protein HMX1 (HMX1).